Here is a 729-residue protein sequence, read N- to C-terminus: Fatty acid oxidation complex subunit alpha (729 aa).

The tract at residues 1–189 (MLYKGDTLYL…KIGLVDGVVK (189 aa)) is enoyl-CoA hydratase/isomerase. Aspartate 296 is a substrate binding site. Positions 311–729 (ETPKQAAVLG…ARPVGSLKTA (419 aa)) are 3-hydroxyacyl-CoA dehydrogenase. NAD(+) is bound by residues methionine 324, aspartate 343, 400-402 (VVE), lysine 407, and serine 429. The active-site For 3-hydroxyacyl-CoA dehydrogenase activity is histidine 450. Position 453 (asparagine 453) interacts with NAD(+). Substrate-binding residues include asparagine 500 and tyrosine 660. Residues 707–729 (TRHNEPYYPPVEPARPVGSLKTA) form a disordered region.

It in the N-terminal section; belongs to the enoyl-CoA hydratase/isomerase family. This sequence in the C-terminal section; belongs to the 3-hydroxyacyl-CoA dehydrogenase family. As to quaternary structure, heterotetramer of two alpha chains (FadB) and two beta chains (FadA).

It catalyses the reaction a (3S)-3-hydroxyacyl-CoA + NAD(+) = a 3-oxoacyl-CoA + NADH + H(+). It carries out the reaction a (3S)-3-hydroxyacyl-CoA = a (2E)-enoyl-CoA + H2O. The enzyme catalyses a 4-saturated-(3S)-3-hydroxyacyl-CoA = a (3E)-enoyl-CoA + H2O. The catalysed reaction is (3S)-3-hydroxybutanoyl-CoA = (3R)-3-hydroxybutanoyl-CoA. It catalyses the reaction a (3Z)-enoyl-CoA = a 4-saturated (2E)-enoyl-CoA. It carries out the reaction a (3E)-enoyl-CoA = a 4-saturated (2E)-enoyl-CoA. Its pathway is lipid metabolism; fatty acid beta-oxidation. Involved in the aerobic and anaerobic degradation of long-chain fatty acids via beta-oxidation cycle. Catalyzes the formation of 3-oxoacyl-CoA from enoyl-CoA via L-3-hydroxyacyl-CoA. It can also use D-3-hydroxyacyl-CoA and cis-3-enoyl-CoA as substrate. In Salmonella typhi, this protein is Fatty acid oxidation complex subunit alpha.